We begin with the raw amino-acid sequence, 166 residues long: Protein FAM89A (166 aa).

Belongs to the FAM89 family.

The protein is Protein FAM89A (fam89a) of Xenopus laevis (African clawed frog).